The chain runs to 107 residues: Heme-degrading monooxygenase (107 aa).

The region spanning 2-94 (IIVTNTAKIT…YILDNKITYY (93 aa)) is the ABM domain. Asn-6 provides a ligand contact to Fe cation. His-76 contacts heme.

The protein belongs to the antibiotic biosynthesis monooxygenase family. Heme-degrading monooxygenase IsdG subfamily. As to quaternary structure, homodimer.

The protein localises to the cytoplasm. The catalysed reaction is heme b + 3 reduced [NADPH--hemoprotein reductase] + 3 O2 = biliverdin IXalpha + CO + Fe(2+) + 3 oxidized [NADPH--hemoprotein reductase] + 3 H2O + H(+). Allows bacterial pathogens to use the host heme as an iron source. Catalyzes the oxidative degradation of the heme macrocyclic porphyrin ring to the biliverdin in the presence of a suitable electron donor such as ascorbate or NADPH--cytochrome P450 reductase, with subsequent release of free iron. The chain is Heme-degrading monooxygenase from Bacillus thuringiensis subsp. konkukian (strain 97-27).